The sequence spans 362 residues: Cationic peroxidase SPC4 (362 aa).

A signal peptide spans 1 to 31 (MSRAPTLAAAAAVAAVVLICSSSTATAADGN). Cystine bridges form between cysteine 50-cysteine 131, cysteine 83-cysteine 88, cysteine 138-cysteine 333, and cysteine 218-cysteine 245. Catalysis depends on histidine 81, which acts as the Proton acceptor. Residues aspartate 82, valine 85, glycine 87, aspartate 89, and serine 91 each coordinate Ca(2+). An N-linked (GlcNAc...) asparagine glycan is attached at asparagine 109. Residue threonine 111 participates in (indol-3-yl)acetate binding. Proline 181 serves as a coordination point for substrate. Position 211 (histidine 211) interacts with heme b. Position 212 (threonine 212) interacts with Ca(2+). N-linked (GlcNAc...) asparagine glycosylation is present at asparagine 234. Residues aspartate 257, threonine 260, alanine 263, and aspartate 265 each coordinate Ca(2+). Asparagine 332 is a glycosylation site (N-linked (GlcNAc...) asparagine).

It belongs to the peroxidase family. Classical plant (class III) peroxidase subfamily. In terms of assembly, monomer. Requires heme b as cofactor. Ca(2+) is required as a cofactor. In terms of processing, the proportions of glycoforms I and II are 35% and 65% respectively. Present in germinated and ungerminated grain, seedlings, and leaves and stem of the mature plant.

Its subcellular location is the secreted. The catalysed reaction is 2 a phenolic donor + H2O2 = 2 a phenolic radical donor + 2 H2O. Removal of H(2)O(2), oxidation of toxic reductants, biosynthesis and degradation of lignin, suberization, auxin catabolism, response to environmental stresses such as wounding, pathogen attack and oxidative stress. These functions might be dependent on each isozyme/isoform in each plant tissue. Has a high preference for hydroxycinnamates as substrates. Substrate preference is ferulic acid &gt; p-coumaric acid &gt; N-acetyl tyrosine methyl ester &gt; N-acetyl-tyrosine &gt; tyrosine &gt; catechol &gt; Gly-Tyr-Gly. May be involved in the formation of diferulate linkages in the plant cell wall. The chain is Cationic peroxidase SPC4 from Sorghum bicolor (Sorghum).